A 645-amino-acid chain; its full sequence is Glucans biosynthesis glucosyltransferase H (645 aa).

The span at 1-13 (MDGTVTPSPTTTA) shows a compositional bias: polar residues. The segment at 1-32 (MDGTVTPSPTTTAMPPVSALDAGTPTLPPEAP) is disordered. The next 7 helical transmembrane spans lie at 64–84 (LIGG…SVLW), 98–118 (LFVL…AGFV), 423–443 (APMW…GGGI), 465–485 (AIWI…LGYI), 504–524 (AVSI…VMYL), 559–579 (YGGL…VSPA), and 580–600 (LAAW…VVAL).

Belongs to the glycosyltransferase 2 family. OpgH subfamily.

Its subcellular location is the cell inner membrane. The protein operates within glycan metabolism; osmoregulated periplasmic glucan (OPG) biosynthesis. Involved in the biosynthesis of osmoregulated periplasmic glucans (OPGs). The sequence is that of Glucans biosynthesis glucosyltransferase H from Xanthomonas euvesicatoria pv. vesicatoria (strain 85-10) (Xanthomonas campestris pv. vesicatoria).